Reading from the N-terminus, the 255-residue chain is Hydroxyacylglutathione hydrolase (255 aa).

H56, H58, D60, H61, H112, D129, and H167 together coordinate Zn(2+).

Belongs to the metallo-beta-lactamase superfamily. Glyoxalase II family. In terms of assembly, monomer. Zn(2+) serves as cofactor.

It carries out the reaction an S-(2-hydroxyacyl)glutathione + H2O = a 2-hydroxy carboxylate + glutathione + H(+). Its pathway is secondary metabolite metabolism; methylglyoxal degradation; (R)-lactate from methylglyoxal: step 2/2. In terms of biological role, thiolesterase that catalyzes the hydrolysis of S-D-lactoyl-glutathione to form glutathione and D-lactic acid. The chain is Hydroxyacylglutathione hydrolase from Pseudomonas fluorescens (strain SBW25).